The sequence spans 198 residues: Probable GTP-binding protein EngB (198 aa).

In terms of domain architecture, EngB-type G spans 36–198; that stretch reads SDPQFAFIGR…NLSKLQELLE (163 aa). GTP is bound by residues 44-51, 70-74, 88-91, 155-158, and 182-184; these read GRSNVGKS, GRTQL, DLPG, NKID, and ISA. 2 residues coordinate Mg(2+): serine 51 and threonine 72.

The protein belongs to the TRAFAC class TrmE-Era-EngA-EngB-Septin-like GTPase superfamily. EngB GTPase family. It depends on Mg(2+) as a cofactor.

Functionally, necessary for normal cell division and for the maintenance of normal septation. In Mesomycoplasma hyopneumoniae (strain 7448) (Mycoplasma hyopneumoniae), this protein is Probable GTP-binding protein EngB.